The primary structure comprises 81 residues: Cytochrome b559 subunit alpha (81 aa).

A helical transmembrane segment spans residues 21 to 35 (IIHSITIPMLFIAGW). Histidine 23 serves as a coordination point for heme.

This sequence belongs to the PsbE/PsbF family. Heterodimer of an alpha subunit and a beta subunit. PSII is composed of 1 copy each of membrane proteins PsbA, PsbB, PsbC, PsbD, PsbE, PsbF, PsbH, PsbI, PsbJ, PsbK, PsbL, PsbM, PsbT, PsbX, PsbY, PsbZ, Psb30/Ycf12, peripheral proteins PsbO, CyanoQ (PsbQ), PsbU, PsbV and a large number of cofactors. It forms dimeric complexes. Heme b is required as a cofactor.

The protein localises to the cellular thylakoid membrane. Functionally, this b-type cytochrome is tightly associated with the reaction center of photosystem II (PSII). PSII is a light-driven water:plastoquinone oxidoreductase that uses light energy to abstract electrons from H(2)O, generating O(2) and a proton gradient subsequently used for ATP formation. It consists of a core antenna complex that captures photons, and an electron transfer chain that converts photonic excitation into a charge separation. The chain is Cytochrome b559 subunit alpha from Microcystis aeruginosa (strain NIES-843 / IAM M-2473).